The following is a 218-amino-acid chain: Protein-L-isoaspartate O-methyltransferase (218 aa).

Residue Ser-52 is part of the active site.

It belongs to the methyltransferase superfamily. L-isoaspartyl/D-aspartyl protein methyltransferase family.

It is found in the cytoplasm. The catalysed reaction is [protein]-L-isoaspartate + S-adenosyl-L-methionine = [protein]-L-isoaspartate alpha-methyl ester + S-adenosyl-L-homocysteine. Catalyzes the methyl esterification of L-isoaspartyl residues in peptides and proteins that result from spontaneous decomposition of normal L-aspartyl and L-asparaginyl residues. It plays a role in the repair and/or degradation of damaged proteins. The protein is Protein-L-isoaspartate O-methyltransferase of Rhodopseudomonas palustris (strain ATCC BAA-98 / CGA009).